We begin with the raw amino-acid sequence, 206 residues long: Pyridoxine/pyridoxamine 5'-phosphate oxidase (206 aa).

FMN-binding positions include 53-58 (RMVLLK), 68-69 (YT), Lys75, and Gln97. Lys58 is a binding site for substrate. Substrate is bound by residues Tyr115, Arg119, and Ser123. FMN contacts are provided by residues 132–133 (QS) and Trp177. Substrate is bound at residue 183–185 (RLH). Arg187 contacts FMN.

The protein belongs to the pyridoxamine 5'-phosphate oxidase family. In terms of assembly, homodimer. FMN serves as cofactor.

It catalyses the reaction pyridoxamine 5'-phosphate + O2 + H2O = pyridoxal 5'-phosphate + H2O2 + NH4(+). It carries out the reaction pyridoxine 5'-phosphate + O2 = pyridoxal 5'-phosphate + H2O2. The protein operates within cofactor metabolism; pyridoxal 5'-phosphate salvage; pyridoxal 5'-phosphate from pyridoxamine 5'-phosphate: step 1/1. It participates in cofactor metabolism; pyridoxal 5'-phosphate salvage; pyridoxal 5'-phosphate from pyridoxine 5'-phosphate: step 1/1. Catalyzes the oxidation of either pyridoxine 5'-phosphate (PNP) or pyridoxamine 5'-phosphate (PMP) into pyridoxal 5'-phosphate (PLP). This is Pyridoxine/pyridoxamine 5'-phosphate oxidase from Sinorhizobium fredii (strain NBRC 101917 / NGR234).